The primary structure comprises 150 residues: MNKTSVPSIDSIDRQWYLVDAENQTLGRLATEVASVLRGKNKASFTPHLDTGDFVIVVNADKIRVSGKKPQQKLYRRHSGRPGGMKVETFEHLQERLPERIVEKAIKGMLPHNALGRQLFRKLKVYKGTEHPHAAQQPKTLQLDPAASAQ.

The segment at 130 to 150 (EHPHAAQQPKTLQLDPAASAQ) is disordered.

Belongs to the universal ribosomal protein uL13 family. As to quaternary structure, part of the 50S ribosomal subunit.

Functionally, this protein is one of the early assembly proteins of the 50S ribosomal subunit, although it is not seen to bind rRNA by itself. It is important during the early stages of 50S assembly. The sequence is that of Large ribosomal subunit protein uL13 from Synechococcus sp. (strain CC9311).